The sequence spans 61 residues: MINIFSFICIYLHSALYSSSFFFGKLPEAYAFLNPIVDVMPVIPLFFFLLAFVWQAAVSFR.

The propeptide occupies 1-24; sequence MINIFSFICIYLHSALYSSSFFFG. The helical transmembrane segment at 40-60 threads the bilayer; the sequence is MPVIPLFFFLLAFVWQAAVSF.

It belongs to the PsbK family. As to quaternary structure, PSII is composed of 1 copy each of membrane proteins PsbA, PsbB, PsbC, PsbD, PsbE, PsbF, PsbH, PsbI, PsbJ, PsbK, PsbL, PsbM, PsbT, PsbX, PsbY, PsbZ, Psb30/Ycf12, at least 3 peripheral proteins of the oxygen-evolving complex and a large number of cofactors. It forms dimeric complexes.

Its subcellular location is the plastid. The protein resides in the chloroplast thylakoid membrane. Its function is as follows. One of the components of the core complex of photosystem II (PSII). PSII is a light-driven water:plastoquinone oxidoreductase that uses light energy to abstract electrons from H(2)O, generating O(2) and a proton gradient subsequently used for ATP formation. It consists of a core antenna complex that captures photons, and an electron transfer chain that converts photonic excitation into a charge separation. The polypeptide is Photosystem II reaction center protein K (Pelargonium hortorum (Common geranium)).